The chain runs to 543 residues: Chaperonin GroEL (543 aa).

Residues 29 to 32, 86 to 90, G413, 476 to 478, and D492 each bind ATP; these read TLGP, DGTTT, and NAA.

This sequence belongs to the chaperonin (HSP60) family. As to quaternary structure, forms a cylinder of 14 subunits composed of two heptameric rings stacked back-to-back. Interacts with the co-chaperonin GroES.

It localises to the cytoplasm. It carries out the reaction ATP + H2O + a folded polypeptide = ADP + phosphate + an unfolded polypeptide.. Its function is as follows. Together with its co-chaperonin GroES, plays an essential role in assisting protein folding. The GroEL-GroES system forms a nano-cage that allows encapsulation of the non-native substrate proteins and provides a physical environment optimized to promote and accelerate protein folding. This Streptococcus pyogenes serotype M49 (strain NZ131) protein is Chaperonin GroEL.